Consider the following 150-residue polypeptide: Large ribosomal subunit protein uL11 (150 aa).

The disordered stretch occupies residues 83–111 (AAGLKPQGKRNRAKGSEKPGRQTAGTVTA).

Belongs to the universal ribosomal protein uL11 family. As to quaternary structure, part of the ribosomal stalk of the 50S ribosomal subunit. Interacts with L10 and the large rRNA to form the base of the stalk. L10 forms an elongated spine to which L12 dimers bind in a sequential fashion forming a multimeric L10(L12)X complex. Post-translationally, one or more lysine residues are methylated.

Forms part of the ribosomal stalk which helps the ribosome interact with GTP-bound translation factors. The polypeptide is Large ribosomal subunit protein uL11 (Paracoccus denitrificans (strain Pd 1222)).